A 378-amino-acid chain; its full sequence is uncharacterized protein (378 aa).

Residues Cys-38, His-60, Cys-90, Cys-93, Cys-96, and Cys-104 each contribute to the Zn(2+) site.

Belongs to the zinc-containing alcohol dehydrogenase family. Class-III subfamily. Requires Zn(2+) as cofactor.

This is an uncharacterized protein from Bacillus subtilis (strain 168).